We begin with the raw amino-acid sequence, 867 residues long: Mitochondrial escape protein 2 (867 aa).

The N-terminal 25 residues, 1-25, are a transit peptide targeting the mitochondrion; the sequence is MIIRTLRSQLRLPKPVYISPPCRYY. The Mitochondrial matrix segment spans residues 26–279; sequence STDLEKLKKE…LVSLISNHTK (254 aa). One can recognise an RRM domain in the interval 179–264; that stretch reads GTPWIEDLRR…TTLHIQFVAI (86 aa). A helical membrane pass occupies residues 280 to 300; sequence IAIPVLIALLATFAVLIFDPI. The Mitochondrial intermembrane segment spans residues 301–867; that stretch reads REWFIEYKIL…DGKSFLGIKF (567 aa). A coiled-coil region spans residues 795 to 852; sequence IGRLISLEAAKIQKLEEELEKIYKIGKVDGRIDYVSQKIEASNKKILDLEKQAADVAS.

This sequence belongs to the YME2 family.

It is found in the mitochondrion inner membrane. Its function is as follows. Plays a role in maintaining the mitochondrial genome and in controlling the mtDNA escape. Involved in the regulation of mtDNA nucleotide structure and number. May have a dispensable role in early maturation of pre-rRNA. The sequence is that of Mitochondrial escape protein 2 (PRP13) from Candida albicans (strain SC5314 / ATCC MYA-2876) (Yeast).